The sequence spans 510 residues: Secreted RxLR effector protein 24 (510 aa).

An N-terminal signal peptide occupies residues 1–18; that stretch reads MRGAFYVAIALLGSHTAA. The RxLR-dEER signature appears at 47–68; that stretch reads RVLRERRDSKDKLTVHAGAEER.

Belongs to the RxLR effector family.

It is found in the secreted. Its subcellular location is the host nucleus. Its function is as follows. Secreted effector that acts as an elicitor that induces cell death in host plant cells. In Plasmopara viticola (Downy mildew of grapevine), this protein is Secreted RxLR effector protein 24.